The primary structure comprises 247 residues: Isoprenyl transferase (247 aa).

Residue Asp18 is part of the active site. Asp18 serves as a coordination point for Mg(2+). Residues 19 to 22 (GNGR), Trp23, Arg31, His35, and 63 to 65 (SSE) each bind substrate. Asn66 serves as the catalytic Proton acceptor. Residues Trp67, Arg69, Arg186, and 192 to 194 (RLS) contribute to the substrate site. Residue Glu205 coordinates Mg(2+).

It belongs to the UPP synthase family. Homodimer. The cofactor is Mg(2+).

Its function is as follows. Catalyzes the condensation of isopentenyl diphosphate (IPP) with allylic pyrophosphates generating different type of terpenoids. The protein is Isoprenyl transferase of Rhizobium meliloti (strain 1021) (Ensifer meliloti).